Here is a 378-residue protein sequence, read N- to C-terminus: Palmitoyltransferase PFA4 (378 aa).

The Cytoplasmic portion of the chain corresponds to 1–9; sequence MPVKLRWPW. Residues 10–30 traverse the membrane as a helical segment; it reads LGIAIPTFLISFIGYGAHYFI. Topologically, residues 31–40 are lumenal; it reads LSNFLSVPKQ. A helical membrane pass occupies residues 41 to 61; that stretch reads ITFEFCLSMIWLSYYLAICTN. The Cytoplasmic portion of the chain corresponds to 62 to 119; it reads PGRPLPNYKPPPDIWRNFCKKCQSYKPERSHHCKTCNQCVLMMDHHCPWTMNCVGFAN. The DHHC domain maps to 78 to 128; the sequence is NFCKKCQSYKPERSHHCKTCNQCVLMMDHHCPWTMNCVGFANYPHFLRFLF. Cysteine 108 acts as the S-palmitoyl cysteine intermediate in catalysis. Residues 120-140 form a helical membrane-spanning segment; sequence YPHFLRFLFWIIVTTSVLFCI. Residues 141–164 lie on the Lumenal side of the membrane; the sequence is QAKRIYFIWQQRHLPGYFFKKSEL. Residues 165–185 traverse the membrane as a helical segment; the sequence is IFLTISSPLNSFVLLTITILF. The Cytoplasmic segment spans residues 186–378; it reads LRCLFNQILN…DDFGVDVDME (193 aa).

It belongs to the DHHC palmitoyltransferase family. PFA4 subfamily. Post-translationally, autopalmitoylated.

It is found in the endoplasmic reticulum membrane. The enzyme catalyses L-cysteinyl-[protein] + hexadecanoyl-CoA = S-hexadecanoyl-L-cysteinyl-[protein] + CoA. Functionally, mediates the reversible addition of palmitate to target proteins, thereby regulating their membrane association and biological function. Palmitoylates several amino acid permeases. Palmitoylates chitin synthase CHS3, which is required for its proper export from the ER. Can palmitoylate RAS2 in vitro. The protein is Palmitoyltransferase PFA4 of Saccharomyces cerevisiae (strain ATCC 204508 / S288c) (Baker's yeast).